Consider the following 363-residue polypeptide: Endopolygalacturonase 1 (363 aa).

Positions 1-17 (MVSYLFVLGALASVAIA) are cleaved as a signal peptide. The propeptide occupies 18-26 (SPVPELKAR). Cysteine 29 and cysteine 44 are oxidised to a cystine. PbH1 repeat units follow at residues 188–209 (STGV…AVNS), 210–230 (GTNI…SIGS), 239–260 (VKSV…RIKT), and 268–290 (VSDI…VIEQ). Residue aspartate 202 is the Proton donor of the active site. Residues cysteine 204 and cysteine 220 are joined by a disulfide bond. Residue asparagine 212 is glycosylated (N-linked (GlcNAc...) asparagine). Histidine 224 is an active-site residue. 2 disulfide bridges follow: cysteine 330/cysteine 333 and cysteine 352/cysteine 363.

This sequence belongs to the glycosyl hydrolase 28 family.

The protein localises to the secreted. It carries out the reaction (1,4-alpha-D-galacturonosyl)n+m + H2O = (1,4-alpha-D-galacturonosyl)n + (1,4-alpha-D-galacturonosyl)m.. In terms of biological role, involved in maceration and soft-rotting of plant tissue. Hydrolyzes the 1,4-alpha glycosidic bonds of de-esterified pectate in the smooth region of the plant cell wall. In Colletotrichum lindemuthianum (Bean anthracnose fungus), this protein is Endopolygalacturonase 1 (PG1).